The sequence spans 66 residues: Photosystem II reaction center protein J (66 aa).

The helical transmembrane segment at 37–57 (LWLVATAGGMAVIFVVGLFFY) threads the bilayer.

The protein belongs to the PsbJ family. PSII is composed of 1 copy each of membrane proteins PsbA, PsbB, PsbC, PsbD, PsbE, PsbF, PsbH, PsbI, PsbJ, PsbK, PsbL, PsbM, PsbT, PsbX, PsbY, PsbZ, Psb30/Ycf12, peripheral proteins PsbO, CyanoQ (PsbQ), PsbU, PsbV and a large number of cofactors. It forms dimeric complexes.

It localises to the cellular thylakoid membrane. Functionally, one of the components of the core complex of photosystem II (PSII). PSII is a light-driven water:plastoquinone oxidoreductase that uses light energy to abstract electrons from H(2)O, generating O(2) and a proton gradient subsequently used for ATP formation. It consists of a core antenna complex that captures photons, and an electron transfer chain that converts photonic excitation into a charge separation. In Synechococcus sp. (strain CC9311), this protein is Photosystem II reaction center protein J.